A 437-amino-acid chain; its full sequence is C-terminal-binding protein 2 (437 aa).

NAD(+)-binding positions include S103, 183-188, D207, 240-246, 267-269, and D293; these read IGLGRI, CNLNEHN, and TAR. R269 is an active-site residue. E298 is an active-site residue. The Proton donor role is filled by H318. 318–321 lines the NAD(+) pocket; sequence HTAW. A disordered region spans residues 410-437; sequence PLIPSVSHTPSPGQTTKPDPDREIPTDQ. The span at 415–426 shows a compositional bias: polar residues; it reads VSHTPSPGQTTK. Basic and acidic residues predominate over residues 427 to 437; that stretch reads PDPDREIPTDQ.

It belongs to the D-isomer specific 2-hydroxyacid dehydrogenase family. Interacts with the C-terminus of tcf7l1-a via the consensus motifs P-X-[DNS]-L-[STVA].

It is found in the nucleus. Corepressor targeting diverse transcription regulators. The sequence is that of C-terminal-binding protein 2 (ctbp2) from Xenopus laevis (African clawed frog).